The following is a 288-amino-acid chain: Aquaporin NIP2-1 (288 aa).

Met-1 carries the N-acetylmethionine modification. The next 2 helical transmembrane spans lie at 50-70 (LLAE…AIAV) and 77-97 (VVTL…LVYC). Residues 106 to 108 (NPA) carry the NPA 1 motif. 3 helical membrane-spanning segments follow: residues 126 to 146 (AYIT…RLLF), 170 to 190 (LQAF…VCAV), and 202 to 222 (GLII…VSGA). The NPA 2 signature appears at 225–227 (NPA). Residues 234 to 254 (LVWGCYKGIWIYLLAPTLGAV) form a helical membrane-spanning segment. At Ser-278 the chain carries Phosphoserine.

Belongs to the MIP/aquaporin (TC 1.A.8) family. NIP (TC 1.A.8.12) subfamily. As to expression, specifically expressed in roots with high expression in root elongation zone and root stele.

Its subcellular location is the endoplasmic reticulum membrane. Low water transport activity in yeast cells. The protein is Aquaporin NIP2-1 (NIP2-1) of Arabidopsis thaliana (Mouse-ear cress).